The sequence spans 238 residues: Leucine-rich repeat-containing protein 57 (238 aa).

LRR repeat units follow at residues 10-36 (LETSQKTGVFQLTGKGLTEFPEDLQKL), 37-62 (TANLRTVDLSNNKIEELPAFIGSFQH), 64-82 (KSFTISCNKLTSLPNDIGK), 83-106 (LKKLETLILNGNQLKQLPSSIGQL), 108-128 (SLRTLSLSGNQFKEFPSGLGT), 129-152 (LRQLDVLDLSKNQIRVVPAEVAEL), 154-173 (AIEINLNQNQISSVTQEVSR), and 174-199 (TPRLKVLRLEENCLELSSIPLSILTD).

This is Leucine-rich repeat-containing protein 57 (lrrc57) from Danio rerio (Zebrafish).